The primary structure comprises 609 residues: Sporulation-specific protein 21 (609 aa).

Disordered regions lie at residues 1-50, 68-96, and 124-165; these read MDNI…LENS, PASK…DGNS, and KLDS…SIKG. A compositionally biased stretch (polar residues) spans 10 to 31; that stretch reads MEGTSTMTVTSRSSEDSSCISN. Residues 32–43 show a composition bias toward basic and acidic residues; the sequence is HEQDTDTHKDGD. Residues 68–81 are compositionally biased toward low complexity; sequence PASKSSRSIGSMKS. Composition is skewed to polar residues over residues 82–96 and 127–136; these read NQSL…DGNS and STGSQRSKNN. Residues 143-159 are compositionally biased toward low complexity; that stretch reads SSTTSQTTCSSSSSSSS. Coiled coils occupy residues 283-342, 357-393, and 424-483; these read RTKI…DNES, RETL…ATNF, and ENLT…LLIE. The disordered stretch occupies residues 586 to 609; that stretch reads DQKSNQNSSTPYKQSQRQVPHSIK. A compositionally biased stretch (polar residues) spans 587–609; that stretch reads QKSNQNSSTPYKQSQRQVPHSIK.

The protein belongs to the MPC70 family. As to quaternary structure, interacts directly with MPC54, NUD1 and SPC42. Interacts with ADY3. Interacts with ADY4. Probable component of a SPB complex composed of ADY3, SSP1, DON1, MPC54, SPO21/MPC70, NUD1 and CNM67.

It localises to the prospore membrane. The protein localises to the cytoplasm. The protein resides in the cytoskeleton. Its subcellular location is the spindle pole. Its function is as follows. Involved in the pathway that organizes the shaping and sizing of the prospore membrane (PSM) during sporulation. May provide a meiosis-specific scaffold for the assembly of other proteins on spindle pole bodies (SPBs), and may be a limiting component for SPB formation. This is Sporulation-specific protein 21 (SPO21) from Saccharomyces cerevisiae (strain ATCC 204508 / S288c) (Baker's yeast).